Here is a 139-residue protein sequence, read N- to C-terminus: MEYQGQHGHATDKVEEYGQPVAGHGGFTGGPTGTHGAAGVGGAQLQATRDGHKTDGVLRRSGSSSSSSSEDDGVGGRRKKGMKEKIKEKLPGGAHKDAAGQQQQTAMAGEYAGTHGTEATGEKKGVMDKIKEKLPGGQH.

The disordered stretch occupies residues 1 to 139; sequence MEYQGQHGHA…IKEKLPGGQH (139 aa). Residues 23 to 42 show a composition bias toward gly residues; that stretch reads GHGGFTGGPTGTHGAAGVGG. Residues 49-58 show a composition bias toward basic and acidic residues; it reads RDGHKTDGVL. The segment covering 59-68 has biased composition (low complexity); sequence RRSGSSSSSS. Residues 83–98 are compositionally biased toward basic and acidic residues; that stretch reads KEKIKEKLPGGAHKDA. A compositionally biased stretch (low complexity) spans 99–109; the sequence is AGQQQQTAMAG. The segment covering 120–139 has biased composition (basic and acidic residues); it reads TGEKKGVMDKIKEKLPGGQH.

Belongs to the plant dehydrin family.

This Hordeum vulgare (Barley) protein is Dehydrin DHN1 (DHN1).